The sequence spans 296 residues: Syntenin-2 (296 aa).

2 PDZ domains span residues 112-191 and 196-271; these read EIHL…VRDR and TVTM…IPTV.

As to quaternary structure, monomer and homodimer. Interacts with SDCBP. Interacts with TM4SF1.

The protein localises to the cytoplasm. The protein resides in the nucleus. Its subcellular location is the nucleolus. It localises to the nucleoplasm. It is found in the cell membrane. The protein localises to the nucleus speckle. Its function is as follows. Binds phosphatidylinositol 4,5-bisphosphate (PIP2). May play a role in the organization of nuclear PIP2, cell division and cell survival. This is Syntenin-2 (Sdcbp2) from Rattus norvegicus (Rat).